We begin with the raw amino-acid sequence, 69 residues long: Putative membrane protein insertion efficiency factor (69 aa).

The protein belongs to the UPF0161 family.

The protein localises to the cell inner membrane. In terms of biological role, could be involved in insertion of integral membrane proteins into the membrane. The polypeptide is Putative membrane protein insertion efficiency factor (Geobacter sulfurreducens (strain ATCC 51573 / DSM 12127 / PCA)).